Here is a 546-residue protein sequence, read N- to C-terminus: Chaperonin GroEL (546 aa).

ATP contacts are provided by residues Thr30–Pro33, Lys51, Asp87–Thr91, Gly415, Asn479–Ala481, and Asp495.

This sequence belongs to the chaperonin (HSP60) family. Forms a cylinder of 14 subunits composed of two heptameric rings stacked back-to-back. Interacts with the co-chaperonin GroES.

The protein resides in the cytoplasm. The enzyme catalyses ATP + H2O + a folded polypeptide = ADP + phosphate + an unfolded polypeptide.. Its function is as follows. Together with its co-chaperonin GroES, plays an essential role in assisting protein folding. The GroEL-GroES system forms a nano-cage that allows encapsulation of the non-native substrate proteins and provides a physical environment optimized to promote and accelerate protein folding. The protein is Chaperonin GroEL of Paraburkholderia phytofirmans (strain DSM 17436 / LMG 22146 / PsJN) (Burkholderia phytofirmans).